Consider the following 1470-residue polypeptide: Roundabout homolog 2 (1470 aa).

A signal peptide spans 1 to 21 (MNPLMFTLLLLFGFLCIQIDG). Residues 22–863 (SRLRQEDFPP…EQITDVVKQP (842 aa)) lie on the Extracellular side of the membrane. 5 Ig-like C2-type domains span residues 31–127 (PRIV…ASLE), 133–220 (DDFR…AELT), 225–309 (PTFL…ATLT), 318–413 (PQFV…LEVT), and 422–508 (PIIL…AVLD). Cysteine 52 and cysteine 110 form a disulfide bridge. Asparagine 123 carries N-linked (GlcNAc...) asparagine glycosylation. 3 disulfides stabilise this stretch: cysteine 154–cysteine 203, cysteine 246–cysteine 293, and cysteine 339–cysteine 395. N-linked (GlcNAc...) asparagine glycosylation occurs at asparagine 430. A disulfide bridge links cysteine 443 with cysteine 492. Fibronectin type-III domains are found at residues 528 to 622 (PPSK…TQDI), 641 to 739 (VVVR…TEEA), and 743 to 840 (PPQS…IGGR). N-linked (GlcNAc...) asparagine glycans are attached at residues asparagine 756, asparagine 786, asparagine 793, and asparagine 849. Residues 864 to 884 (AFIAGIGGACWVILMGFSIWL) form a helical membrane-spanning segment. At 885–1470 (YWRRKKRKGL…GSNSQGQFTE (586 aa)) the chain is on the cytoplasmic side. 4 disordered regions span residues 1036-1089 (GFGY…LPGT), 1129-1159 (EDRVPTPPVRGVASSPAISFGQQSTATLTPS), 1190-1371 (IQSN…DCPA), and 1383-1470 (DWIN…QFTE). The span at 1144–1158 (PAISFGQQSTATLTP) shows a compositional bias: polar residues. A Phosphothreonine modification is found at threonine 1157. Phosphoserine is present on serine 1159. A compositionally biased stretch (pro residues) spans 1194-1203 (TPPPQPPAPP). Residues 1215 to 1231 (LETDVPDEDADDEEEPL) show a composition bias toward acidic residues. Polar residues predominate over residues 1243-1288 (TPGSSMDNLDSSVTGKAFSSSQRQRPTSPFSTDSNTSAAQNQSQRP). Positions 1315–1325 (DLPPPPDPPPG) are enriched in pro residues. The span at 1328–1343 (LRQQIGLSQHSGNVEN) shows a compositional bias: polar residues. Over residues 1413–1437 (SKPSFPSPGGHSSSGTSSSKGSTGP) the composition is skewed to low complexity. Residues 1461–1470 (GSNSQGQFTE) show a composition bias toward polar residues.

The protein belongs to the immunoglobulin superfamily. ROBO family. Interacts with SLIT2. As to expression, expressed in embryonal spinal cord.

The protein localises to the membrane. Its function is as follows. Receptor for SLIT2, and probably SLIT1, which are thought to act as molecular guidance cue in cellular migration, including axonal navigation at the ventral midline of the neural tube and projection of axons to different regions during neuronal development. This is Roundabout homolog 2 (Robo2) from Mus musculus (Mouse).